The sequence spans 177 residues: Large ribosomal subunit protein uL10 (177 aa).

Belongs to the universal ribosomal protein uL10 family. In terms of assembly, part of the ribosomal stalk of the 50S ribosomal subunit. The N-terminus interacts with L11 and the large rRNA to form the base of the stalk. The C-terminus forms an elongated spine to which L12 dimers bind in a sequential fashion forming a multimeric L10(L12)X complex.

In terms of biological role, forms part of the ribosomal stalk, playing a central role in the interaction of the ribosome with GTP-bound translation factors. The chain is Large ribosomal subunit protein uL10 from Caldanaerobacter subterraneus subsp. tengcongensis (strain DSM 15242 / JCM 11007 / NBRC 100824 / MB4) (Thermoanaerobacter tengcongensis).